Consider the following 442-residue polypeptide: UPF0489 protein C5orf22 homolog (442 aa).

The segment at 175–208 (SSAKKPKLALEDSRNTASTNCDSSSEGLEKDTAT) is disordered. Positions 189–200 (NTASTNCDSSSE) are enriched in polar residues.

This sequence belongs to the UPF0489 family.

The chain is UPF0489 protein C5orf22 homolog from Pongo abelii (Sumatran orangutan).